Here is a 204-residue protein sequence, read N- to C-terminus: Pneumococcal vaccine antigen A (204 aa).

Its subcellular location is the cell surface. This chain is Pneumococcal vaccine antigen A (pvaA), found in Streptococcus pneumoniae serotype 4 (strain ATCC BAA-334 / TIGR4).